Here is a 348-residue protein sequence, read N- to C-terminus: Phosphoribosylformylglycinamidine cyclo-ligase (348 aa).

Belongs to the AIR synthase family.

It localises to the cytoplasm. The enzyme catalyses 2-formamido-N(1)-(5-O-phospho-beta-D-ribosyl)acetamidine + ATP = 5-amino-1-(5-phospho-beta-D-ribosyl)imidazole + ADP + phosphate + H(+). The protein operates within purine metabolism; IMP biosynthesis via de novo pathway; 5-amino-1-(5-phospho-D-ribosyl)imidazole from N(2)-formyl-N(1)-(5-phospho-D-ribosyl)glycinamide: step 2/2. The chain is Phosphoribosylformylglycinamidine cyclo-ligase from Aromatoleum aromaticum (strain DSM 19018 / LMG 30748 / EbN1) (Azoarcus sp. (strain EbN1)).